Here is a 680-residue protein sequence, read N- to C-terminus: Dipeptidyl carboxypeptidase (680 aa).

Histidine 469 lines the Zn(2+) pocket. Glutamate 470 is an active-site residue. The Zn(2+) site is built by histidine 473 and histidine 476.

Belongs to the peptidase M3 family. It depends on Zn(2+) as a cofactor.

The protein localises to the cytoplasm. It carries out the reaction Hydrolysis of unblocked, C-terminal dipeptides from oligopeptides, with broad specificity. Does not hydrolyze bonds in which P1' is Pro, or both P1 and P1' are Gly.. Its function is as follows. Removes dipeptides from the C-termini of N-blocked tripeptides, tetrapeptides and larger peptides. The sequence is that of Dipeptidyl carboxypeptidase (dcp) from Salmonella typhimurium (strain LT2 / SGSC1412 / ATCC 700720).